A 127-amino-acid polypeptide reads, in one-letter code: Auxin-responsive protein SAUR76 (127 aa).

Positions 20 to 40 are disordered; sequence SFNTKPNQPPAQTNHSRSSAV.

It belongs to the ARG7 family. In terms of tissue distribution, expressed in cotyledons, hypocotyls and roots of young seedlings. Expressed in emerging lateral root, leaves, flowers, stamens and filaments.

It localises to the nucleus. The protein resides in the cytoplasm. It is found in the cell membrane. Functionally, may be involved in the regulation of ethylene receptor signaling. Promotes cell expansion and plant growth. Involved in the regulation of cell elongation. This is Auxin-responsive protein SAUR76 from Arabidopsis thaliana (Mouse-ear cress).